A 334-amino-acid polypeptide reads, in one-letter code: Holliday junction branch migration complex subunit RuvB (334 aa).

The segment at 4-184 (ADRLIQPQDL…FGIPLRLEFY (181 aa)) is large ATPase domain (RuvB-L). Residues Arg-24, Gly-65, Lys-68, Thr-69, Thr-70, 131–133 (EDY), Arg-174, Tyr-184, and Arg-221 contribute to the ATP site. Position 69 (Thr-69) interacts with Mg(2+). Residues 185 to 255 (NVRDLSSIVA…VAQSALDLLD (71 aa)) are small ATPAse domain (RuvB-S). The segment at 258-334 (SEGFDYMDRK…YSHFDLIKPD (77 aa)) is head domain (RuvB-H). DNA contacts are provided by Arg-294, Arg-313, and Arg-318.

Belongs to the RuvB family. As to quaternary structure, homohexamer. Forms an RuvA(8)-RuvB(12)-Holliday junction (HJ) complex. HJ DNA is sandwiched between 2 RuvA tetramers; dsDNA enters through RuvA and exits via RuvB. An RuvB hexamer assembles on each DNA strand where it exits the tetramer. Each RuvB hexamer is contacted by two RuvA subunits (via domain III) on 2 adjacent RuvB subunits; this complex drives branch migration. In the full resolvosome a probable DNA-RuvA(4)-RuvB(12)-RuvC(2) complex forms which resolves the HJ.

It localises to the cytoplasm. The catalysed reaction is ATP + H2O = ADP + phosphate + H(+). Its function is as follows. The RuvA-RuvB-RuvC complex processes Holliday junction (HJ) DNA during genetic recombination and DNA repair, while the RuvA-RuvB complex plays an important role in the rescue of blocked DNA replication forks via replication fork reversal (RFR). RuvA specifically binds to HJ cruciform DNA, conferring on it an open structure. The RuvB hexamer acts as an ATP-dependent pump, pulling dsDNA into and through the RuvAB complex. RuvB forms 2 homohexamers on either side of HJ DNA bound by 1 or 2 RuvA tetramers; 4 subunits per hexamer contact DNA at a time. Coordinated motions by a converter formed by DNA-disengaged RuvB subunits stimulates ATP hydrolysis and nucleotide exchange. Immobilization of the converter enables RuvB to convert the ATP-contained energy into a lever motion, pulling 2 nucleotides of DNA out of the RuvA tetramer per ATP hydrolyzed, thus driving DNA branch migration. The RuvB motors rotate together with the DNA substrate, which together with the progressing nucleotide cycle form the mechanistic basis for DNA recombination by continuous HJ branch migration. Branch migration allows RuvC to scan DNA until it finds its consensus sequence, where it cleaves and resolves cruciform DNA. This is Holliday junction branch migration complex subunit RuvB from Shewanella amazonensis (strain ATCC BAA-1098 / SB2B).